Reading from the N-terminus, the 268-residue chain is Purine nucleoside phosphorylase (268 aa).

Residues Ser-36, His-68, 88–90, and Ala-120 contribute to the phosphate site; that span reads RIH. Glu-189 lines the a purine D-ribonucleoside pocket. Ser-208 is a phosphate binding site. Asn-231 contributes to the a purine D-ribonucleoside binding site.

It belongs to the PNP/MTAP phosphorylase family. As to quaternary structure, homotrimer.

The catalysed reaction is a purine 2'-deoxy-D-ribonucleoside + phosphate = a purine nucleobase + 2-deoxy-alpha-D-ribose 1-phosphate. It participates in purine metabolism; purine nucleoside salvage. Its function is as follows. The purine nucleoside phosphorylases catalyze the phosphorolytic breakdown of the N-glycosidic bond in the beta-(deoxy)ribonucleoside molecules, with the formation of the corresponding free purine bases and pentose-1-phosphate. Cleaves guanosine, inosine, 2'-deoxyguanosine and 2'-deoxyinosine. This is Purine nucleoside phosphorylase (punA) from Mycobacterium leprae (strain TN).